The chain runs to 150 residues: SPbeta prophage-derived uncharacterized protein YoqH (150 aa).

An N-terminal signal peptide occupies residues 1-23 (MKRFILVLSFLSIIVAYPIQTNA).

The polypeptide is SPbeta prophage-derived uncharacterized protein YoqH (yoqH) (Bacillus subtilis (strain 168)).